The chain runs to 480 residues: Transposase for transposon Tn552 (480 aa).

A DNA-binding region (H-T-H motif) is located at residues 36-55 (LSSISKSKGIALSTLYRWNK). Residues 155 to 341 (ESSRPNEIWQ…TPINRWNSNH (187 aa)) enclose the Integrase catalytic domain. The segment at 438 to 480 (RKHLKQNIASPSTTDLIKEEKSYGYSPQETTKNVKKLKRYRND) is disordered. Positions 470–480 (NVKKLKRYRND) are enriched in basic residues.

The polypeptide is Transposase for transposon Tn552 (Staphylococcus aureus).